We begin with the raw amino-acid sequence, 507 residues long: ATP synthase subunit alpha, chloroplastic (507 aa).

170–177 contacts ATP; the sequence is GDRQTGKT.

Belongs to the ATPase alpha/beta chains family. As to quaternary structure, F-type ATPases have 2 components, CF(1) - the catalytic core - and CF(0) - the membrane proton channel. CF(1) has five subunits: alpha(3), beta(3), gamma(1), delta(1), epsilon(1). CF(0) has four main subunits: a, b, b' and c.

Its subcellular location is the plastid. It is found in the chloroplast thylakoid membrane. The catalysed reaction is ATP + H2O + 4 H(+)(in) = ADP + phosphate + 5 H(+)(out). Produces ATP from ADP in the presence of a proton gradient across the membrane. The alpha chain is a regulatory subunit. This Pelargonium hortorum (Common geranium) protein is ATP synthase subunit alpha, chloroplastic.